The chain runs to 319 residues: Urease accessory protein UreD (319 aa).

The disordered stretch occupies residues 284–319 (RLSTPQPPREWPLQEEGTFSNERFTKDHQSPSASPH).

The protein belongs to the UreD family. As to quaternary structure, ureD, UreF and UreG form a complex that acts as a GTP-hydrolysis-dependent molecular chaperone, activating the urease apoprotein by helping to assemble the nickel containing metallocenter of UreC. The UreE protein probably delivers the nickel.

The protein resides in the cytoplasm. Its function is as follows. Required for maturation of urease via the functional incorporation of the urease nickel metallocenter. In Prochlorococcus marinus (strain MIT 9313), this protein is Urease accessory protein UreD.